The following is a 567-amino-acid chain: Cytochrome P450 monooxygenase 69 (567 aa).

A helical membrane pass occupies residues 7–24 (ELAALTVVLLATGVLFYA). N-linked (GlcNAc...) asparagine glycans are attached at residues Asn25, Asn81, Asn223, and Asn279. Residue Cys475 participates in heme binding.

This sequence belongs to the cytochrome P450 family. It depends on heme as a cofactor.

It is found in the membrane. The protein operates within secondary metabolite biosynthesis. Functionally, cytochrome P450 monooxygenase that is able to use 4-ethoxybenzoic acid as a substrate for oxidation. This Postia placenta (strain ATCC 44394 / Madison 698-R) (Brown rot fungus) protein is Cytochrome P450 monooxygenase 69.